We begin with the raw amino-acid sequence, 750 residues long: Alpha-galactosidase C (750 aa).

An N-terminal signal peptide occupies residues 1-26 (MFRSTATVAAATAMGLLTATGHGSLA). N-linked (GlcNAc...) asparagine glycans are attached at residues asparagine 58, asparagine 162, asparagine 186, asparagine 194, asparagine 366, asparagine 428, asparagine 432, and asparagine 453. Aspartate 511 (nucleophile) is an active-site residue. The active-site Proton donor is the aspartate 573.

It belongs to the glycosyl hydrolase 36 family. In terms of assembly, homotetramer. Mg(2+) serves as cofactor. It depends on NAD(+) as a cofactor.

It localises to the secreted. The enzyme catalyses Hydrolysis of terminal, non-reducing alpha-D-galactose residues in alpha-D-galactosides, including galactose oligosaccharides, galactomannans and galactolipids.. Its function is as follows. Hydrolyzes a variety of simple alpha-D-galactoside as well as more complex molecules such as oligosaccharides and polysaccharides. Active on paranitrophenyl-alpha-galactoside, raffinose, locust bean gum and gum guar. This is Alpha-galactosidase C (aglC) from Emericella nidulans (strain FGSC A4 / ATCC 38163 / CBS 112.46 / NRRL 194 / M139) (Aspergillus nidulans).